We begin with the raw amino-acid sequence, 563 residues long: Arginine--tRNA ligase (563 aa).

The 'HIGH' region motif lies at 120–130 (PNIAKPFHVGH).

This sequence belongs to the class-I aminoacyl-tRNA synthetase family. Monomer.

The protein resides in the cytoplasm. The catalysed reaction is tRNA(Arg) + L-arginine + ATP = L-arginyl-tRNA(Arg) + AMP + diphosphate. The chain is Arginine--tRNA ligase from Clostridium beijerinckii (strain ATCC 51743 / NCIMB 8052) (Clostridium acetobutylicum).